The sequence spans 406 residues: MAREMRIVSVRELTGYIKERLESDPFLAHVWVRGEVSACTRHPSGHLYFFLKDEAARIRVVMFRSQVSRLGVPLENGTTVVVRGYLGVYERNGEYQLYAQGAEAEGAGKLHAALERLKEKLQREGLFDPARKRALPALPDTVGVVTSPVGAALKDILTIMRRRWPPARVLLAPVSVQGETAPYEIAQAIRALNGAGGVDVIIVGRGGGAPEELAAFNTEVVARAIFESRIPVVSAVGHEKDVTVADLVADWRAPTPSAAAEAVVPDQRAVRERLAAVESRLGRAVRHRLAVYRVRLEALRQRPVMASPGVLCRRRREVVRSLEERLGGAIGRRTGEGRSRLAVLSGRLEALSPLQVLARGYSICRRADGRIVRDADGVSPGERVIIWLHAGGLSCLVEETFPSRNP.

This sequence belongs to the XseA family. As to quaternary structure, heterooligomer composed of large and small subunits.

It localises to the cytoplasm. It catalyses the reaction Exonucleolytic cleavage in either 5'- to 3'- or 3'- to 5'-direction to yield nucleoside 5'-phosphates.. Its function is as follows. Bidirectionally degrades single-stranded DNA into large acid-insoluble oligonucleotides, which are then degraded further into small acid-soluble oligonucleotides. The chain is Exodeoxyribonuclease 7 large subunit from Desulforudis audaxviator (strain MP104C).